A 464-amino-acid polypeptide reads, in one-letter code: MQEPRKLYVKSFGCQMNVYDSQRMADALAKEGYVETQDPADADLVILNTCHIREKAAEKVYSELGRLRKAKQDAGSDTTIAVAGCVAQAEGAEIMKRAPVVDLVVGPQSYHRLPEMLARVRDGKRVVDTEFPAEDKFDHLPAPSAAATKKRGPTAFVTVQEGCDKFCTFCVVPYTRGAEVSRSVSKIVGEARALVDQGVREITLIGQNVNAFHGEGPDGRTWGLGRLLEELAGINGLARLRYTTSHPRDMDDGLIAAHRDLPQLMPYLHLPVQSGSDRILAAMNRKHGREIYFEIIDKLRAARPDIALSSDFIVGFPGETEADFEDTLDLARRVGFASAYSFKYSIRPGTPAAEHDHQLSEEVKSERLARLHQVLEASKTAFDRACMGRRFDILLEKPGRLPGQLIGRSPYLQSVVVTAPGAGIGDFVTVDITDVGPNSLAGQVVDAVEDRGRTSDRPLVAMEA.

Positions 5–122 (RKLYVKSFGC…LPEMLARVRD (118 aa)) constitute an MTTase N-terminal domain. [4Fe-4S] cluster contacts are provided by C14, C50, C85, C163, C167, and C170. Positions 149-383 (KKRGPTAFVT…VLEASKTAFD (235 aa)) constitute a Radical SAM core domain. In terms of domain architecture, TRAM spans 384–446 (RACMGRRFDI…PNSLAGQVVD (63 aa)).

The protein belongs to the methylthiotransferase family. MiaB subfamily. As to quaternary structure, monomer. It depends on [4Fe-4S] cluster as a cofactor.

Its subcellular location is the cytoplasm. It carries out the reaction N(6)-dimethylallyladenosine(37) in tRNA + (sulfur carrier)-SH + AH2 + 2 S-adenosyl-L-methionine = 2-methylsulfanyl-N(6)-dimethylallyladenosine(37) in tRNA + (sulfur carrier)-H + 5'-deoxyadenosine + L-methionine + A + S-adenosyl-L-homocysteine + 2 H(+). Catalyzes the methylthiolation of N6-(dimethylallyl)adenosine (i(6)A), leading to the formation of 2-methylthio-N6-(dimethylallyl)adenosine (ms(2)i(6)A) at position 37 in tRNAs that read codons beginning with uridine. This is tRNA-2-methylthio-N(6)-dimethylallyladenosine synthase from Azorhizobium caulinodans (strain ATCC 43989 / DSM 5975 / JCM 20966 / LMG 6465 / NBRC 14845 / NCIMB 13405 / ORS 571).